A 375-amino-acid chain; its full sequence is Fluoride export protein 1 (375 aa).

Over 1–11 the chain is Cytoplasmic; sequence MIFNPVISNHK. The chain crosses the membrane as a helical span at residues 12-32; it reads LSHYIHVFCTFTTFCILGTET. Residues 33–34 lie on the Extracellular side of the membrane; that stretch reads RQ. Residues 35-55 traverse the membrane as a helical segment; the sequence is AITALSTYTPAFVTAPTVLWS. The Cytoplasmic segment spans residues 56–79; it reads NCSSCMLMGIMQSLNAYTWMKDHQ. A helical transmembrane segment spans residues 80-100; sequence VLFLGVTTGYCGALSSFSSML. Over 101-127 the chain is Extracellular; sequence LEMFEHSTNLTNGNIANHTKLPNRAYG. N-linked (GlcNAc...) asparagine glycosylation is found at Asn-109 and Asn-117. Residues 128-148 form a helical membrane-spanning segment; it reads IMEFLSVLLVHLMVSMGSLIF. Residues 149–213 are Cytoplasmic-facing; the sequence is GRQLGKEVIV…FKKFFDIVDK (65 aa). The chain crosses the membrane as a helical span at residues 214-234; the sequence is LAYALAFPLIILFVVLCAYYE. Asn-235 carries N-linked (GlcNAc...) asparagine glycosylation. The Extracellular segment spans residues 235-241; the sequence is NYSRGKW. The chain crosses the membrane as a helical span at residues 242–262; the sequence is TLPCLFGIFAGFLRYWLAEMF. The Cytoplasmic segment spans residues 263-268; sequence NKTNKK. Residues 269 to 289 form a helical membrane-spanning segment; the sequence is FPLGTFLANVFATLLIGIFTM. Over 290-310 the chain is Extracellular; it reads VQRGKKHFSTDVPIVNSLNSC. Residues 311 to 331 traverse the membrane as a helical segment; the sequence is HIVSALISGFCGTLSTISTFI. The Cytoplasmic portion of the chain corresponds to 332–338; it reads NEGYKLS. Residues 339–359 form a helical membrane-spanning segment; the sequence is FINMLIYYTVSIAISYCLLVI. Residues 360 to 375 are Extracellular-facing; the sequence is TLGSYAWTRGLTNPIC.

This sequence belongs to the fluoride channel Fluc/FEX (TC 1.A.43) family.

The protein localises to the cell membrane. It catalyses the reaction fluoride(in) = fluoride(out). Functionally, fluoride channel required for the rapid expulsion of cytoplasmic fluoride. This is Fluoride export protein 1 from Saccharomyces cerevisiae (strain ATCC 204508 / S288c) (Baker's yeast).